A 502-amino-acid polypeptide reads, in one-letter code: Tryptophan decarboxylase TDC1 (502 aa).

Polar residues predominate over residues 1-18; sequence MGSLDSNYDTESPASVGQ. The interval 1-21 is disordered; that stretch reads MGSLDSNYDTESPASVGQFNP. The residue at position 319 (lysine 319) is an N6-(pyridoxal phosphate)lysine.

This sequence belongs to the group II decarboxylase family. Requires pyridoxal 5'-phosphate as cofactor. In terms of tissue distribution, highly expressed in apex. Expressed in young stem and bark tissues. Expressed at low levels in leaves, fruits and seeds.

The catalysed reaction is L-tryptophan + H(+) = tryptamine + CO2. Functionally, involved in the biosynthesis of tryptamine. Supplies tryptamine for the indole moiety of camptothecin (CPT), an anti-cancer monoterpene alkaloid. Represents a key step in monoterpene indole alkaloid biosynthesis. Is specific for tryptophan, and inactive against tyrosine, phenylalanine and 3,4-dihydroxyphenylalanine (dopa). The chain is Tryptophan decarboxylase TDC1 from Camptotheca acuminata (Happy tree).